We begin with the raw amino-acid sequence, 684 residues long: Cleavage and polyadenylation specificity factor 73 (684 aa).

Zn(2+) is bound by residues H77, H79, D81, H82, H164, and D185. The Proton donor role is filled by H402. Residue H424 participates in Zn(2+) binding.

It belongs to the metallo-beta-lactamase superfamily. RNA-metabolizing metallo-beta-lactamase-like family. CPSF3 subfamily. In terms of assembly, component of the cleavage and polyadenylation specificity factor (CPSF) complex, composed of at least Clp, Cpsf73, Cpsf100 and Cpsf160. Interacts with Sym and Cpsf100 forming a core cleavage factor required for both polyadenylated and histone mRNA processing. Interacts with Slbp and Lsm11. The cofactor is Zn(2+).

Its subcellular location is the nucleus. In terms of biological role, component of the cleavage and polyadenylation specificity factor (CPSF) complex that plays a key role in pre-mRNA 3'-end formation, recognizing the AAUAAA signal sequence and interacting with poly(A) polymerase and other factors to bring about cleavage and poly(A) addition. Has endonuclease activity and functions as an mRNA 3'-end-processing endonuclease. Required for the cotranscriptional processing of 3'-ends of polyadenylated and histone pre-mRNA. In Drosophila melanogaster (Fruit fly), this protein is Cleavage and polyadenylation specificity factor 73 (Cpsf73).